Reading from the N-terminus, the 549-residue chain is ATP synthase subunit alpha (549 aa).

172–179 contributes to the ATP binding site; the sequence is GDRKTGKT. A disordered region spans residues 513-549; sequence SSTGESVVPDEHVEAMDEEDLGKESVKVKKPAPQKKK. Basic residues predominate over residues 540-549; it reads VKKPAPQKKK.

This sequence belongs to the ATPase alpha/beta chains family. F-type ATPases have 2 components, CF(1) - the catalytic core - and CF(0) - the membrane proton channel. CF(1) has five subunits: alpha(3), beta(3), gamma(1), delta(1), epsilon(1). CF(0) has three main subunits: a(1), b(2) and c(9-12). The alpha and beta chains form an alternating ring which encloses part of the gamma chain. CF(1) is attached to CF(0) by a central stalk formed by the gamma and epsilon chains, while a peripheral stalk is formed by the delta and b chains.

It localises to the cell membrane. The catalysed reaction is ATP + H2O + 4 H(+)(in) = ADP + phosphate + 5 H(+)(out). In terms of biological role, produces ATP from ADP in the presence of a proton gradient across the membrane. The alpha chain is a regulatory subunit. This chain is ATP synthase subunit alpha, found in Mycobacterium ulcerans (strain Agy99).